The sequence spans 720 residues: Pro-neuregulin-3, membrane-bound isoform (720 aa).

Residues 1–360 are Extracellular-facing; it reads MSEGAAAASP…MESEEVYQRQ (360 aa). 3 disordered regions span residues 28-48, 119-223, and 246-280; these read AAAA…AAEP, SSFP…AMPS, and PFQD…TTYS. Residues 34-44 show a composition bias toward gly residues; the sequence is AGGGPDGGGEG. The span at 127–148 shows a compositional bias: low complexity; it reads TTTTTTSTTSPATPSAGGAASS. The segment covering 149-163 has biased composition (polar residues); sequence RTPNRISTRLTTITR. Low complexity-rich tracts occupy residues 187–205 and 250–271; these read TAAP…SSST and AASS…TSTS. One can recognise an EGF-like domain in the interval 286 to 329; the sequence is HFKPCRDKDLAYCLNDGECFVIETLTGSHKHCRCKEGYQGVRCD. Intrachain disulfides connect C290/C304, C298/C317, and C319/C328. A helical transmembrane segment spans residues 361–381; sequence VLSISCIIFGIVIVGMFCAAF. The Cytoplasmic portion of the chain corresponds to 382–720; that stretch reads YFKSKKQAKQ…EIQRDSALTK (339 aa). A disordered region spans residues 451–481; sequence PQSFPEVPSPDRGSQSVKHHRSLSSCCSPGQ.

The protein belongs to the neuregulin family. In terms of assembly, interacts with ERBB4. Post-translationally, proteolytic cleavage close to the plasma membrane on the external face leads to the release of the soluble growth factor form. In terms of processing, extensive glycosylation precedes the proteolytic cleavage. Isoform 3 is glycosylated. As to expression, highly expressed in most regions of the brain with the exception of corpus callosum. Expressed at lower level in testis. Not detected in heart, placenta, lung, liver, skeletal muscle, kidney, pancreas, spleen, thymus, prostate, ovary, small intestine, colon and peripheral blood leukocytes.

Its subcellular location is the cell membrane. It is found in the secreted. In terms of biological role, direct ligand for the ERBB4 tyrosine kinase receptor. Binding results in ligand-stimulated tyrosine phosphorylation and activation of the receptor. Does not bind to the EGF receptor, ERBB2 or ERBB3 receptors. May be a survival factor for oligodendrocytes. This Homo sapiens (Human) protein is Pro-neuregulin-3, membrane-bound isoform (NRG3).